Reading from the N-terminus, the 485-residue chain is Envelope glycoprotein C (485 aa).

A signal peptide spans 1 to 32 (MGLVNIMRFITFAYIICGGFILTRTSGTSASA). Residues 28–72 (TSASASPATPTTNTGEGTSSPVTPTYTTSTDSNNSTATNNSTDVN) are compositionally biased toward low complexity. Positions 28–88 (TSASASPATP…TPSHPHSHEN (61 aa)) are disordered. Over 33–444 (SPATPTTNTG…DASPIVEDMP (412 aa)) the chain is Virion surface. 11 N-linked (GlcNAc...) asparagine; by host glycosylation sites follow: N60, N61, N66, N67, N72, N108, N116, N147, N220, N225, and N286. Cysteines 92 and 109 form a disulfide. The region spanning 237 to 330 (PLMDLSVHPS…EWYRDEVSFS (94 aa)) is the Ig-like domain. 3 disulfide bridges follow: C256/C318, C357/C416, and C361/C390. The chain crosses the membrane as a helical span at residues 445–468 (VLTGIIAVTCGAAALALVVLITAV). The Cytoplasmic segment spans residues 469 to 485 (CFYCSKPSQVPYKKADF).

It belongs to the herpesviridae glycoprotein C family. As to quaternary structure, interacts with host complement component C3; this interaction inhibits host immune response by disregulating complement cascade.

It is found in the virion membrane. In terms of biological role, essential for the initial attachment to heparan sulfate moieties of the host cell surface proteoglycans. Also plays a role in host immune evasion by inhibiting the host complement cascade activation. In Equine herpesvirus 4 (strain 1942) (EHV-4), this protein is Envelope glycoprotein C (gC).